We begin with the raw amino-acid sequence, 600 residues long: Oligopeptide-binding protein OppA (600 aa).

An N-terminal signal peptide occupies residues 1–22 (MNKLKVTLLASSVVLAATLLSA). C23 carries the N-palmitoyl cysteine lipid modification. Residue C23 is the site of S-diacylglycerol cysteine attachment.

Belongs to the bacterial solute-binding protein 5 family. The complex is composed of two ATP-binding proteins (OppD and OppF), two transmembrane proteins (OppB and OppC) and a solute-binding protein (OppA).

The protein localises to the cell membrane. Functionally, part of the ABC transporter complex OppABCDF involved in the uptake of oligopeptides. The polypeptide is Oligopeptide-binding protein OppA (Lactococcus lactis subsp. cremoris (strain SK11)).